Consider the following 185-residue polypeptide: MVSSWRVQQAAQDIRAGAVIAYPTEAVWGLGCDPWDEEAVYRLLAIKSRPVEKGLILIADNIRQFDFLFEDFPELWLDRMASTWPGPNTWLVPHQNLLPEWITGIHETVALRVTDHPTVRELCALVGPLISTSANPAGRPAARSRLRVEQYFRGQIDGVLGGSLGGRRNPSVIRDIATAQIVRAG.

Positions 4–185 (SWRVQQAAQD…IATAQIVRAG (182 aa)) constitute a YrdC-like domain.

Belongs to the SUA5 family. TsaC subfamily.

The protein resides in the cytoplasm. It carries out the reaction L-threonine + hydrogencarbonate + ATP = L-threonylcarbamoyladenylate + diphosphate + H2O. Functionally, required for the formation of a threonylcarbamoyl group on adenosine at position 37 (t(6)A37) in tRNAs that read codons beginning with adenine. Catalyzes the conversion of L-threonine, HCO(3)(-)/CO(2) and ATP to give threonylcarbamoyl-AMP (TC-AMP) as the acyladenylate intermediate, with the release of diphosphate. The sequence is that of Threonylcarbamoyl-AMP synthase from Pseudomonas syringae pv. syringae (strain B728a).